The sequence spans 370 residues: Putative agmatine deiminase (370 aa).

Positions 1 to 19 (MTNMNVDATQLTTKPSQDG) are enriched in polar residues. Residues 1 to 20 (MTNMNVDATQLTTKPSQDGF) form a disordered region. The active-site Amidino-cysteine intermediate is the cysteine 361.

Belongs to the agmatine deiminase family.

It catalyses the reaction agmatine + H2O = N-carbamoylputrescine + NH4(+). This is Putative agmatine deiminase from Shewanella frigidimarina (strain NCIMB 400).